The primary structure comprises 368 residues: Mitogen-activated protein kinase 7 (368 aa).

In terms of domain architecture, Protein kinase spans 32 to 319 (YVPIKPIGRG…VTDALLHPYM (288 aa)). ATP is bound by residues 38-46 (IGRGAYGVV) and Lys61. The active-site Proton acceptor is Asp158. At Thr191 the chain carries Phosphothreonine. The TXY motif lies at 191 to 193 (TEY). Position 193 is a phosphotyrosine (Tyr193). Thr196 carries the phosphothreonine modification.

It belongs to the protein kinase superfamily. CMGC Ser/Thr protein kinase family. MAP kinase subfamily. As to quaternary structure, interacts with MKK3. Mg(2+) serves as cofactor. Dually phosphorylated on Thr-191 and Tyr-193, which activates the enzyme.

It carries out the reaction L-seryl-[protein] + ATP = O-phospho-L-seryl-[protein] + ADP + H(+). The enzyme catalyses L-threonyl-[protein] + ATP = O-phospho-L-threonyl-[protein] + ADP + H(+). With respect to regulation, activated by threonine and tyrosine phosphorylation. Activated in response to hydrogen peroxide. Activation is triggered by MAPKKK17 and MAPKKK18 in a MKK3-dependent manner. In terms of biological role, MKK3-MPK7 module acts as a positive regulator of PR1 gene expression. The sequence is that of Mitogen-activated protein kinase 7 (MPK7) from Arabidopsis thaliana (Mouse-ear cress).